The primary structure comprises 265 residues: Glutamate racemase (265 aa).

Substrate-binding positions include 9 to 10 and 41 to 42; these read DS and YS. The active-site Proton donor/acceptor is the Cys-73. Substrate is bound at residue 74-75; that stretch reads NT. Cys-184 serves as the catalytic Proton donor/acceptor. Substrate is bound at residue 185–186; it reads TH.

Belongs to the aspartate/glutamate racemases family.

The enzyme catalyses L-glutamate = D-glutamate. The protein operates within cell wall biogenesis; peptidoglycan biosynthesis. Its function is as follows. Provides the (R)-glutamate required for cell wall biosynthesis. The protein is Glutamate racemase of Actinobacillus pleuropneumoniae serotype 3 (strain JL03).